The following is a 757-amino-acid chain: Probable ubiquitin carboxyl-terminal hydrolase MINDY-4 (757 aa).

Disordered regions lie at residues 152–173 and 190–334; these read FVSS…GETP and SLDV…LPGG. Over residues 190–201 the composition is skewed to basic and acidic residues; the sequence is SLDVKRMGENSR. A phosphoserine mark is found at S219 and S223. The segment covering 232-242 has biased composition (low complexity); sequence SSPSSSSTQPQ. The span at 254-277 shows a compositional bias: polar residues; it reads CTQQDILASSNSSPSRTSLGQLSE. Position 289 is a phosphoserine (S289). The span at 299-310 shows a compositional bias: basic and acidic residues; it reads PPWDRARPRDPS. C456 serves as the catalytic Nucleophile. The active-site Proton acceptor is H677.

It belongs to the MINDY deubiquitinase family. FAM188 subfamily.

The catalysed reaction is Thiol-dependent hydrolysis of ester, thioester, amide, peptide and isopeptide bonds formed by the C-terminal Gly of ubiquitin (a 76-residue protein attached to proteins as an intracellular targeting signal).. Probable hydrolase that can remove 'Lys-48'-linked conjugated ubiquitin from proteins. This Homo sapiens (Human) protein is Probable ubiquitin carboxyl-terminal hydrolase MINDY-4.